Consider the following 1059-residue polypeptide: MEQASVPSYVNIPPIAKTRSTSHLAPTPEHHRSVSYEDTTTASTSTDSVPEVRIRSESSQVSRESPPIRASKAFVASYEYEAQKDDELNLPLGAIITLVTVETNEDGWYRGELNGKVGLFPSNYAREVTYKDNLVEFKQDEIMLPVAVRTLSDCQIGHGATATVFKMDIKIKKELQNGRMGEAVGDQMKAALKRFNRHASNFRADVVSTDEQLEQLKREANLVNGLSHNNIVRLLGICLEDPYFGLLLELCEGSSLRNVCRNLNSDAAIPLGVLIDWATQVAEGMEYLTKQGYVHRDLKADNVLVKEEVCLCMDEEMFQYAYCLKCGKRPFDKLQLKITDFGVTRKMTADANRFSTAGTYAWLAPEAFKEGTWSEASDVWSYGVVLWELLTREEPYQGHIPATIAFQIANKGQNLSIGDSCPDRWKKLMQDCWNLEPNFRPKFSTLAISFKQYAKEFKDTHLQRAPSKMAVKELYSECFADKTKEEFEKRFHDLYAGSGDINRKNRHSIAPETKARRLKHHKPKKADITGPTEVKHILSVQKDDKNFRVKTYDQSSTGGTLPRLNERQSTLSLSSPDLFHISNLISGSNTVGHSAHRISRKNAIRHKKNQHRMFESPVVSPTMDDSNTFSTIDNADEVDPNHSKESKKGGTLSRAWAKLPWNKRDSKEDHDERAVAGSISSRSSSTTSSNRLITGQTTRGASAAGLLEIGARSRAQSTADGWEDPNTTKKHKVSPSDKRPVKTTNQTERYVKDLEKDTPLRPAQLPPTHRKSALDQTIPASPNSPDSINNFHPMPLSSRRTTANSSSDGAPCYDALVSHSYGAGHGHKNHFGLSDTIPLFPEEPTHYDMGPGRPFGTNGRAIVNQGGDYYGNISGQNYEGFGHGRSINQSTQYYPVGGGCDDYIPIVQKTVIKPTVGEVGNSPYSENIRCATRNVQNPQYIQCKKNQNPRRIPALPMKIQSESNLVTSGMVFTPRDEQLNGIGNSLSSLSLNEPPDIPAPLPPVVTYPIPASLISPSNRVSMSPPTRMAPVLPLGAMSSPRIMDKEILKNSSVEGTEIY.

Positions 1-66 (MEQASVPSYV…ESSQVSRESP (66 aa)) are disordered. Over residues 38-48 (DTTTASTSTDS) the composition is skewed to low complexity. The SH3 domain maps to 69-130 (RASKAFVASY…PSNYAREVTY (62 aa)). The Protein kinase domain maps to 150–454 (TLSDCQIGHG…TLAISFKQYA (305 aa)). ATP-binding positions include 156-164 (IGHGATATV) and Lys-193. Residues 199-224 (ASNFRADVVSTDEQLEQLKREANLVN) adopt a coiled-coil conformation. The active-site Proton acceptor is Asp-297. Ser-355 carries the phosphoserine; by max-2 and tpa-1 modification. Disordered regions lie at residues 617 to 699 (PVVS…QTTR) and 714 to 808 (RAQS…SSSD). Residues 623 to 633 (MDDSNTFSTID) are compositionally biased toward polar residues. Composition is skewed to basic and acidic residues over residues 639–648 (DPNHSKESKK) and 662–674 (NKRDSKEDHDERA). The segment covering 678–689 (SISSRSSSTTSS) has biased composition (low complexity). The segment covering 690–699 (NRLITGQTTR) has biased composition (polar residues). Positions 749-759 (RYVKDLEKDTP) are enriched in basic and acidic residues. Composition is skewed to polar residues over residues 774 to 790 (LDQTIPASPNSPDSINN) and 798 to 808 (SRRTTANSSSD). The NPQY motif signature appears at 937–940 (NPQY). Tyr-940 is subject to Phosphotyrosine.

It belongs to the protein kinase superfamily. STE Ser/Thr protein kinase family. MAP kinase kinase kinase subfamily. As to quaternary structure, interacts with max-2; the interaction is independent of max-2 and mlk-1 kinase activities. May interact (via NPQY motif when phosphorylated on tyrosine residue) with shc-1 (via PID domain); the interaction may facilitate mek-1 phosphorylation by bringing mlk-1 and mek-1 together. Interacts with svh-2 (via cytoplasmic domain). Interacts with tpa-1. Mg(2+) is required as a cofactor. May be phosphorylated on tyrosine residues by svh-2. Post-translationally, may be ubiquitinated and targeted for proteasomal degradation by E3 ubiquitin ligase rpm-1. In terms of tissue distribution, expressed in pharynx, intestine, hypodermis, neurons and body muscles.

The enzyme catalyses L-seryl-[protein] + ATP = O-phospho-L-seryl-[protein] + ADP + H(+). It carries out the reaction L-threonyl-[protein] + ATP = O-phospho-L-threonyl-[protein] + ADP + H(+). With respect to regulation, activated by phosphorylation at Ser-355. May be activated by svh-2-mediated phosphorylation. Functionally, serine/threonine-protein kinase which, by phosphorylating and activating mek-1, plays an important role in the activation of the JNK pathway composed of mlk-1, mek-1 and kgb-1. Involved in the response to environmental stress such as heavy metals. By activating the JNK pathway downstream of tyrosine receptor svh-2, plays a role in axon regeneration after injury. The polypeptide is Mitogen-activated protein kinase kinase kinase mlk-1 (Caenorhabditis elegans).